The sequence spans 869 residues: NACHT, LRR and PYD domains-containing protein 6 (869 aa).

The region spanning 37-128 is the Pyrin domain; sequence KLRDAPLDGR…REHVLRQHAK (92 aa). Residues 194-511 form the NACHT domain; sequence LTVVLQGPAG…EFLAALSYLL (318 aa). Position 200–207 (200–207) interacts with ATP; sequence GPAGIGKT. The segment at 350–354 is disordered; the sequence is KDKKK. The stretch at 460–485 is one LRR 1 repeat; the sequence is EEDLEKLKLRGSQVQTIFLNKKEIPG. The tract at residues 577-608 is disordered; it reads VQGQSHPKGPPVGAKKTAELEDIEDAEEEEEE. A compositionally biased stretch (acidic residues) spans 596–608; the sequence is LEDIEDAEEEEEE. LRR repeat units lie at residues 635–658 and 837–860; these read LSSL…VLNY and TLSL…KTSK.

Belongs to the NLRP family. In terms of assembly, homomultimer; forms the NLRP6 inflammasome polymeric complex, a filament composed of homopolymers in response to pathogens and other damage-associated signals. The core of NLRP6 inflammasomes consists of a signal sensor component (NLRP6), an adapter (PYCARD/ASC), which recruits effector pro-inflammatory caspases (CASP1 and CASP4). Interacts (via pyrin domain) with PYCARD/ASC (via pyrin domain); interaction takes place following NLRP6 activation and formation of liquid-liquid phase separation (LLPS), initiating nucleation which greatly enhances further addition of soluble PYCARD/ASC molecules to the speck in a prion-like polymerization process. Clustered PYCARD/ASC nucleates the formation of CASP1 (or possibly CASP4) filaments through the interaction of their respective CARD domains, acting as a platform for CASP1 polymerization. CASP1 filament formation increases local enzyme concentration, resulting in trans-autocleavage and activation. Active CASP1 then processes IL1B and IL18 precursors, leading to the release of mature cytokines in the extracellular milieu and inflammatory response. Interacts with DHX15. Post-translationally, polyubiquitinated with 'Lys-63'-linked chains, promoting the interaction with PYCARD/ASC and formation of the NLRP6 inflammasome. Deubiquitination by CYLD decreases the interaction with PYCARD/ASC. As to expression, highly expressed in the gastrointestinal tract, predominantly in colonic myofibroblasts and in colonic epithelial and endothelial cells. Within the intestinal mucosa, highly expressed by goblet cells. Also expressed in hepatocytes and in immune cells, including CD4(+) and CD8(+) T-cells, dendritic cells, mastocytes and peritoneal macrophages, as well as in lung, kidney, bladder and gonads.

It is found in the cytoplasm. The protein resides in the inflammasome. It localises to the cell membrane. The protein localises to the nucleus membrane. Functionally, acts as the sensor component of the NLRP6 inflammasome, which mediates inflammasome activation in response to various pathogen-associated signals, leading to maturation and secretion of IL1B and IL18. Inflammasomes are supramolecular complexes that assemble in the cytosol in response to pathogens and other damage-associated signals and play critical roles in innate immunity and inflammation. Acts as a recognition receptor (PRR): recognizes and binds specific pathogens and other damage-associated signals, such as lipoteichoic acid (LTA), a cell-wall component of Gram-positive bacteria, or double stranded RNA (dsRNA). May also recognize and bind lipopolysaccharide (LPS), a major component of the outer membrane of Gram-negative bacteria; however, LPS is probably not a major activator of the NLRP6 inflammasome. Following LTA- or dsRNA-binding, NLRP6 undergoes liquid-liquid phase separation (LLPS), enhancing multivalent interactions, an essential step for the formation of the NLRP6 inflammasome polymeric complex. The NLRP6 inflammasome acts by promoting recruitment of effector pro-inflammatory caspases (CASP1 and/or CASP4) that catalyze maturation and secretion of IL1B and IL18 in the extracellular milieu. The NLRP6 inflammasome plays a central role in the maintenance of epithelial integrity and host defense against microbial infections in the intestine. Required to restrict infection against Gram-positive bacteria by recognizing lipoteichoic acid (LTA), leading to recruitment of CASP4 and CASP1, and subsequent maturation and secretion of IL1B and IL18. Involved in intestinal antiviral innate immunity together with DHX15: recognizes and binds viral dsRNA to restrict infection by enteric viruses through the interferon pathway and GSDMD-dependent release of IL18. Required to prevent infection by the apicomplexan parasite C.tyzzeri in enterocytes by promoting GSDMD-dependent release of IL18. The NLRP6 inflammasome may also regulate the gut microbiota composition by acting as a sensor of microbiota-associated metabolites to form a PYCARD/ASC-dependent inflammasome for downstream IL18 release and secretion of antimicrobial peptides. Its role in the regulation of the gut microbiota composition is however subject to discussion. Essential for gut mucosal self-renewal and proliferation. Regulate mucus secretion in an inflammasome- and autophagy-dependent manner to prevent invasion by enteric bacteria. During systemic bacterial infections, the NLRP6 inflammasome negatively regulates neutrophil recruitment and neutrophil extracellular traps (NETs) formation. May promote peripheral nerve recovery following injury via an inflammasome-independent mechanism. This chain is NACHT, LRR and PYD domains-containing protein 6, found in Mus musculus (Mouse).